The primary structure comprises 86 residues: Small ribosomal subunit protein bS20 (86 aa).

It belongs to the bacterial ribosomal protein bS20 family.

Its function is as follows. Binds directly to 16S ribosomal RNA. The protein is Small ribosomal subunit protein bS20 of Mycolicibacterium vanbaalenii (strain DSM 7251 / JCM 13017 / BCRC 16820 / KCTC 9966 / NRRL B-24157 / PYR-1) (Mycobacterium vanbaalenii).